A 293-amino-acid chain; its full sequence is Small ribosomal subunit protein uS3 (293 aa).

A KH type-2 domain is found at 39 to 110 (IRREIMKFLK…KISIKIKEVK (72 aa)).

Belongs to the universal ribosomal protein uS3 family. In terms of assembly, part of the 30S ribosomal subunit. Forms a tight complex with proteins S10 and S14.

Functionally, binds the lower part of the 30S subunit head. Binds mRNA in the 70S ribosome, positioning it for translation. This is Small ribosomal subunit protein uS3 from Borreliella burgdorferi (strain ATCC 35210 / DSM 4680 / CIP 102532 / B31) (Borrelia burgdorferi).